Reading from the N-terminus, the 1070-residue chain is DNA-directed RNA polymerase subunit beta (1070 aa).

Belongs to the RNA polymerase beta chain family. In terms of assembly, in plastids the minimal PEP RNA polymerase catalytic core is composed of four subunits: alpha, beta, beta', and beta''. When a (nuclear-encoded) sigma factor is associated with the core the holoenzyme is formed, which can initiate transcription.

Its subcellular location is the plastid. It localises to the chloroplast. The enzyme catalyses RNA(n) + a ribonucleoside 5'-triphosphate = RNA(n+1) + diphosphate. Functionally, DNA-dependent RNA polymerase catalyzes the transcription of DNA into RNA using the four ribonucleoside triphosphates as substrates. The chain is DNA-directed RNA polymerase subunit beta from Piper cenocladum (Ant piper).